Consider the following 231-residue polypeptide: Flagellar L-ring protein (231 aa).

An N-terminal signal peptide occupies residues 1 to 18 (MNRLMIVSLLGIATALGG). The N-palmitoyl cysteine moiety is linked to residue C19. The S-diacylglycerol cysteine moiety is linked to residue C19. Residues 118–141 (LSLSAEYGGSRDAKGDSQAGQSNS) form a disordered region.

It belongs to the FlgH family. The basal body constitutes a major portion of the flagellar organelle and consists of four rings (L,P,S, and M) mounted on a central rod.

It localises to the cell outer membrane. The protein resides in the bacterial flagellum basal body. In terms of biological role, assembles around the rod to form the L-ring and probably protects the motor/basal body from shearing forces during rotation. This chain is Flagellar L-ring protein, found in Pseudomonas aeruginosa (strain LESB58).